A 132-amino-acid polypeptide reads, in one-letter code: Small ribosomal subunit protein uS8 (132 aa).

The protein belongs to the universal ribosomal protein uS8 family. Part of the 30S ribosomal subunit. Contacts proteins S5 and S12.

Its function is as follows. One of the primary rRNA binding proteins, it binds directly to 16S rRNA central domain where it helps coordinate assembly of the platform of the 30S subunit. The polypeptide is Small ribosomal subunit protein uS8 (Borrelia duttonii (strain Ly)).